A 56-amino-acid chain; its full sequence is Large ribosomal subunit protein bL33 (56 aa).

The span at 1–12 (MASKGGRDKIKL) shows a compositional bias: basic and acidic residues. The tract at residues 1-28 (MASKGGRDKIKLESTAGTGHFYTTTKNK) is disordered. The span at 15–25 (TAGTGHFYTTT) shows a compositional bias: polar residues.

Belongs to the bacterial ribosomal protein bL33 family.

In Cupriavidus necator (strain ATCC 17699 / DSM 428 / KCTC 22496 / NCIMB 10442 / H16 / Stanier 337) (Ralstonia eutropha), this protein is Large ribosomal subunit protein bL33.